A 488-amino-acid polypeptide reads, in one-letter code: GTPase Der (488 aa).

Residues 3 to 166 (PVVALVGRPN…YALAPYAEAL (164 aa)) enclose the EngA-type G 1 domain. Residues 9–16 (GRPNVGKS), 56–60 (DTGGI), and 118–121 (NKVD) contribute to the GTP site. Positions 168 to 192 (LNRDGDDEEEKEEREYTEEEAEAEQ) are disordered. Residues 172-190 (GDDEEEKEEREYTEEEAEA) are compositionally biased toward acidic residues. One can recognise an EngA-type G 2 domain in the interval 200-373 (IKLAVIGKPN…SVQEAYESAT (174 aa)). Residues 206–213 (GKPNVGKS), 253–257 (DTAGV), and 318–321 (NKWD) contribute to the GTP site. The 85-residue stretch at 374–458 (RRVSTSMLTR…PIQVRFQDGD (85 aa)) folds into the KH-like domain.

Belongs to the TRAFAC class TrmE-Era-EngA-EngB-Septin-like GTPase superfamily. EngA (Der) GTPase family. In terms of assembly, associates with the 50S ribosomal subunit.

Functionally, GTPase that plays an essential role in the late steps of ribosome biogenesis. The chain is GTPase Der from Shewanella woodyi (strain ATCC 51908 / MS32).